A 399-amino-acid chain; its full sequence is MAETIQEVEDEYKAFCKSFSKESDDPVACIHFTAEGEVTFKSILFVPTFVPRGLFDEYGSKKSDYIKLYVRCVFITDDFRDTMPKNLNFVKGVVDSGGLSLNVSCETLQQHKLLKVIRKKLVHKTLDMIKKIADEKYNDTFWKEFGTNIKLGVIEDHSNRTCLAKLLRFQSSHHPADITSLHQDVERMKEKQDKICLMAGGYEVIYLTEPVVEYCIQALPEFDGKRFQNVAKEGVKFDDSEKTKESHEAVEKEFEPLPNWVKDKAIKDKIEKAMVSQCLTESLCALVASQYGWSGNMERIMKAQAYQTGKGISTNYHASRKKTFEINPRHPLIRDMLRRIKEDEDDKTVLDLAVVEEPDEEPEETAEDKEQDKDKEMDVGTDEEKQETAKESTAEKDEL.

A Glycyl lysine isopeptide (Lys-Gly) (interchain with G-Cter in SUMO2) cross-link involves residue K130. The disordered stretch occupies residues 350–399 (LDLAVVEEPDEEPEETAEDKEQDKDKEMDVGTDEEKQETAKESTAEKDEL). Acidic residues predominate over residues 354–367 (VVEEPDEEPEETAE). Basic and acidic residues predominate over residues 368–399 (DKEQDKDKEMDVGTDEEKQETAKESTAEKDEL).

This sequence belongs to the heat shock protein 90 family.

In terms of biological role, putative molecular chaperone. The chain is Putative endoplasmin-like protein (HSP90B2P) from Homo sapiens (Human).